Here is a 556-residue protein sequence, read N- to C-terminus: GDP-Man:Man(3)GlcNAc(2)-PP-Dol alpha-1,2-mannosyltransferase (556 aa).

The Lumenal segment spans residues 1 to 7; the sequence is MANGLFT. Residues 8-28 form a helical membrane-spanning segment; sequence YVAISLFTIGPLLALFIPFVW. Residues 29-184 are Cytoplasmic-facing; that stretch reads RLVGSSLGWY…RWVLASTWPY (156 aa). Residues 64–79 show a composition bias toward basic and acidic residues; sequence SKSAKGRKAEKEDRDT. The tract at residues 64-86 is disordered; the sequence is SKSAKGRKAEKEDRDTFNNTEAT. The segment at residues 185–205 is an intramembrane region (helical); the sequence is FTLAGQSFGSLIMAWDAFSLL. At 206–454 the chain is on the cytoplasmic side; that stretch reads VPDIFVDTMG…VGVNGMWNEH (249 aa). Residues 455 to 475 constitute an intramembrane region (helical); the sequence is FGIGVVEYQAAGLISVVHDSG. Residues 476–556 lie on the Cytoplasmic side of the membrane; it reads GPKLDIVVEV…KAVEKPKSRQ (81 aa).

Belongs to the glycosyltransferase group 1 family. Glycosyltransferase 4 subfamily.

The protein resides in the endoplasmic reticulum membrane. The catalysed reaction is an alpha-D-Man-(1-&gt;3)-[alpha-D-Man-(1-&gt;6)]-beta-D-Man-(1-&gt;4)-beta-D-GlcNAc-(1-&gt;4)-alpha-D-GlcNAc-diphospho-di-trans,poly-cis-dolichol + 2 GDP-alpha-D-mannose = an alpha-D-Man-(1-&gt;2)-alpha-D-Man-(1-&gt;2)-alpha-D-Man-(1-&gt;3)-[alpha-D-Man-(1-&gt;6)]-beta-D-Man-(1-&gt;4)-beta-D-GlcNAc-(1-&gt;4)-alpha-D-GlcNAc-diphospho-di-trans,poly-cis-dolichol + 2 GDP + 2 H(+). The protein operates within protein modification; protein glycosylation. Functionally, GDP-Man:Man(3)GlcNAc(2)-PP-Dol alpha-1,2-mannosyltransferase that operates in the biosynthetic pathway of dolichol-linked oligosaccharides, the glycan precursors employed in protein asparagine (N)-glycosylation. The assembly of dolichol-linked oligosaccharides begins on the cytosolic side of the endoplasmic reticulum membrane and finishes in its lumen. The sequential addition of sugars to dolichol pyrophosphate produces dolichol-linked oligosaccharides containing fourteen sugars, including two GlcNAcs, nine mannoses and three glucoses. Once assembled, the oligosaccharide is transferred from the lipid to nascent proteins by oligosaccharyltransferases. Catalyzes, on the cytoplasmic face of the endoplasmic reticulum, the addition of the fourth and fifth mannose residues to the dolichol-linked oligosaccharide chain, to produce Man(5)GlcNAc(2)-PP-dolichol core oligosaccharide. This Neurospora crassa (strain ATCC 24698 / 74-OR23-1A / CBS 708.71 / DSM 1257 / FGSC 987) protein is GDP-Man:Man(3)GlcNAc(2)-PP-Dol alpha-1,2-mannosyltransferase (alg-11).